The primary structure comprises 340 residues: NADH-quinone oxidoreductase subunit H 2 (340 aa).

The next 8 membrane-spanning stretches (helical) occupy residues leucine 10 to leucine 30, phenylalanine 84 to isoleucine 104, valine 126 to glycine 146, methionine 172 to valine 192, valine 198 to glutamate 218, valine 255 to isoleucine 275, methionine 279 to phenylalanine 299, and valine 318 to alanine 338.

It belongs to the complex I subunit 1 family. In terms of assembly, NDH-1 is composed of 14 different subunits. Subunits NuoA, H, J, K, L, M, N constitute the membrane sector of the complex.

It localises to the cell inner membrane. The catalysed reaction is a quinone + NADH + 5 H(+)(in) = a quinol + NAD(+) + 4 H(+)(out). Its function is as follows. NDH-1 shuttles electrons from NADH, via FMN and iron-sulfur (Fe-S) centers, to quinones in the respiratory chain. The immediate electron acceptor for the enzyme in this species is believed to be ubiquinone. Couples the redox reaction to proton translocation (for every two electrons transferred, four hydrogen ions are translocated across the cytoplasmic membrane), and thus conserves the redox energy in a proton gradient. This subunit may bind ubiquinone. This Rhizobium etli (strain ATCC 51251 / DSM 11541 / JCM 21823 / NBRC 15573 / CFN 42) protein is NADH-quinone oxidoreductase subunit H 2.